The chain runs to 871 residues: Alanine--tRNA ligase (871 aa).

Residues His559, His563, Cys661, and His665 each coordinate Zn(2+).

This sequence belongs to the class-II aminoacyl-tRNA synthetase family. Zn(2+) serves as cofactor.

The protein resides in the cytoplasm. It carries out the reaction tRNA(Ala) + L-alanine + ATP = L-alanyl-tRNA(Ala) + AMP + diphosphate. Its function is as follows. Catalyzes the attachment of alanine to tRNA(Ala) in a two-step reaction: alanine is first activated by ATP to form Ala-AMP and then transferred to the acceptor end of tRNA(Ala). Also edits incorrectly charged Ser-tRNA(Ala) and Gly-tRNA(Ala) via its editing domain. This Aquifex pyrophilus protein is Alanine--tRNA ligase.